A 59-amino-acid chain; its full sequence is Large ribosomal subunit protein bL32c (59 aa).

The disordered stretch occupies residues 37 to 59 (SRSFSRGNEHPKPKGFSGQQANK).

It belongs to the bacterial ribosomal protein bL32 family.

The protein localises to the plastid. Its subcellular location is the chloroplast. This is Large ribosomal subunit protein bL32c (rpl32) from Zea mays (Maize).